The sequence spans 41 residues: Large ribosomal subunit protein bL36 (41 aa).

The protein belongs to the bacterial ribosomal protein bL36 family.

This Ruegeria sp. (strain TM1040) (Silicibacter sp.) protein is Large ribosomal subunit protein bL36.